The chain runs to 89 residues: Small ribosomal subunit protein bS16c (89 aa).

Belongs to the bacterial ribosomal protein bS16 family.

The protein localises to the plastid. Its subcellular location is the chloroplast. This Drimys granadensis protein is Small ribosomal subunit protein bS16c.